Consider the following 528-residue polypeptide: Glutamyl-tRNA(Gln) amidotransferase subunit B, mitochondrial (528 aa).

Residues 1-21 (MSWRLSFRTNLLIYNVRRRNY) constitute a mitochondrion transit peptide.

The protein belongs to the GatB/GatE family. GatB subfamily. Subunit of the heterotrimeric GatCAB amidotransferase (AdT) complex, composed of A, B and C subunits.

It is found in the mitochondrion. It carries out the reaction L-glutamyl-tRNA(Gln) + L-glutamine + ATP + H2O = L-glutaminyl-tRNA(Gln) + L-glutamate + ADP + phosphate + H(+). Allows the formation of correctly charged Gln-tRNA(Gln) through the transamidation of misacylated Glu-tRNA(Gln) in the mitochondria. The reaction takes place in the presence of glutamine and ATP through an activated gamma-phospho-Glu-tRNA(Gln). This chain is Glutamyl-tRNA(Gln) amidotransferase subunit B, mitochondrial, found in Aedes aegypti (Yellowfever mosquito).